A 243-amino-acid polypeptide reads, in one-letter code: Methylthioribulose-1-phosphate dehydratase (243 aa).

Positions 1 to 22 are disordered; it reads MCPADQTVATNNNDHLVQSEDP. Polar residues predominate over residues 7–16; that stretch reads TVATNNNDHL. A substrate-binding site is contributed by C103. Zn(2+) is bound by residues H120 and H122. The active-site Proton donor/acceptor is the E149. H205 is a binding site for Zn(2+).

This sequence belongs to the aldolase class II family. MtnB subfamily. Zn(2+) is required as a cofactor.

It localises to the cytoplasm. The enzyme catalyses 5-(methylsulfanyl)-D-ribulose 1-phosphate = 5-methylsulfanyl-2,3-dioxopentyl phosphate + H2O. It functions in the pathway amino-acid biosynthesis; L-methionine biosynthesis via salvage pathway; L-methionine from S-methyl-5-thio-alpha-D-ribose 1-phosphate: step 2/6. Catalyzes the dehydration of methylthioribulose-1-phosphate (MTRu-1-P) into 2,3-diketo-5-methylthiopentyl-1-phosphate (DK-MTP-1-P). The protein is Methylthioribulose-1-phosphate dehydratase of Penicillium rubens (strain ATCC 28089 / DSM 1075 / NRRL 1951 / Wisconsin 54-1255) (Penicillium chrysogenum).